Consider the following 131-residue polypeptide: Profilin-2 (131 aa).

It belongs to the profilin family. In terms of assembly, occurs in many kinds of cells as a complex with monomeric actin in a 1:1 ratio.

Its subcellular location is the cytoplasm. It localises to the cytoskeleton. Functionally, binds to actin and affects the structure of the cytoskeleton. At high concentrations, profilin prevents the polymerization of actin, whereas it enhances it at low concentrations. By binding to PIP2, it inhibits the formation of IP3 and DG. The polypeptide is Profilin-2 (Lilium longiflorum (Trumpet lily)).